A 361-amino-acid chain; its full sequence is 3-dehydroquinate synthase (361 aa).

It belongs to the archaeal-type DHQ synthase family.

It catalyses the reaction 2-amino-2,3,7-trideoxy-D-lyxo-hept-6-ulosonate + NAD(+) + H2O = 3-dehydroquinate + NH4(+) + NADH + H(+). Its function is as follows. Catalyzes the oxidative deamination and cyclization of 2-amino-3,7-dideoxy-D-threo-hept-6-ulosonic acid (ADH) to yield 3-dehydroquinate (DHQ), which is fed into the canonical shikimic pathway of aromatic amino acid biosynthesis. This is 3-dehydroquinate synthase (aroB') from Methanocaldococcus jannaschii (strain ATCC 43067 / DSM 2661 / JAL-1 / JCM 10045 / NBRC 100440) (Methanococcus jannaschii).